We begin with the raw amino-acid sequence, 95 residues long: Aspartyl/glutamyl-tRNA(Asn/Gln) amidotransferase subunit C (95 aa).

The protein belongs to the GatC family. Heterotrimer of A, B and C subunits.

The enzyme catalyses L-glutamyl-tRNA(Gln) + L-glutamine + ATP + H2O = L-glutaminyl-tRNA(Gln) + L-glutamate + ADP + phosphate + H(+). The catalysed reaction is L-aspartyl-tRNA(Asn) + L-glutamine + ATP + H2O = L-asparaginyl-tRNA(Asn) + L-glutamate + ADP + phosphate + 2 H(+). In terms of biological role, allows the formation of correctly charged Asn-tRNA(Asn) or Gln-tRNA(Gln) through the transamidation of misacylated Asp-tRNA(Asn) or Glu-tRNA(Gln) in organisms which lack either or both of asparaginyl-tRNA or glutaminyl-tRNA synthetases. The reaction takes place in the presence of glutamine and ATP through an activated phospho-Asp-tRNA(Asn) or phospho-Glu-tRNA(Gln). This chain is Aspartyl/glutamyl-tRNA(Asn/Gln) amidotransferase subunit C, found in Chlorobium phaeobacteroides (strain BS1).